Reading from the N-terminus, the 120-residue chain is Large ribosomal subunit protein uL18 (120 aa).

This sequence belongs to the universal ribosomal protein uL18 family. In terms of assembly, part of the 50S ribosomal subunit; part of the 5S rRNA/L5/L18/L25 subcomplex. Contacts the 5S and 23S rRNAs.

This is one of the proteins that bind and probably mediate the attachment of the 5S RNA into the large ribosomal subunit, where it forms part of the central protuberance. The chain is Large ribosomal subunit protein uL18 from Bradyrhizobium sp. (strain BTAi1 / ATCC BAA-1182).